Here is a 515-residue protein sequence, read N- to C-terminus: Folate synthesis bifunctional protein, mitochondrial (515 aa).

The transit peptide at 1 to 28 directs the protein to the mitochondrion; it reads MSILKCLGVRGNQLCAARNYLKVLGFSS. The HPPK stretch occupies residues 47-172; sequence VIALGSNVGD…PFVMAPLMDL (126 aa). The region spanning 230–498 is the Pterin-binding domain; the sequence is TLVMGILNLT…NVKDNLDAVK (269 aa). The segment at 232–515 is DHPS; sequence VMGILNLTPD…QKSSPIKFKQ (284 aa). Mg(2+) is bound at residue Asn-237. (7,8-dihydropterin-6-yl)methyl diphosphate contacts are provided by residues Thr-277, Asp-314, Asn-333, Asp-406, Lys-451, and 486 to 488; that span reads RVH.

In the N-terminal section; belongs to the HPPK family. This sequence in the C-terminal section; belongs to the DHPS family. As to quaternary structure, homomultimer. Mg(2+) serves as cofactor.

It is found in the mitochondrion. It catalyses the reaction 6-hydroxymethyl-7,8-dihydropterin + ATP = (7,8-dihydropterin-6-yl)methyl diphosphate + AMP + H(+). The catalysed reaction is (7,8-dihydropterin-6-yl)methyl diphosphate + 4-aminobenzoate = 7,8-dihydropteroate + diphosphate. It participates in cofactor biosynthesis; tetrahydrofolate biosynthesis; 2-amino-4-hydroxy-6-hydroxymethyl-7,8-dihydropteridine diphosphate from 7,8-dihydroneopterin triphosphate: step 4/4. The protein operates within cofactor biosynthesis; tetrahydrofolate biosynthesis; 7,8-dihydrofolate from 2-amino-4-hydroxy-6-hydroxymethyl-7,8-dihydropteridine diphosphate and 4-aminobenzoate: step 1/2. Functionally, catalyzes the first two consecutive steps of tetrahydrofolate biosynthesis. This chain is Folate synthesis bifunctional protein, mitochondrial, found in Pisum sativum (Garden pea).